Consider the following 174-residue polypeptide: Dual-action ribosomal maturation protein DarP (174 aa).

Belongs to the DarP family.

It localises to the cytoplasm. Its function is as follows. Member of a network of 50S ribosomal subunit biogenesis factors which assembles along the 30S-50S interface, preventing incorrect 23S rRNA structures from forming. Promotes peptidyl transferase center (PTC) maturation. In Pseudomonas paraeruginosa (strain DSM 24068 / PA7) (Pseudomonas aeruginosa (strain PA7)), this protein is Dual-action ribosomal maturation protein DarP.